Consider the following 147-residue polypeptide: Large ribosomal subunit protein uL13 (147 aa).

This sequence belongs to the universal ribosomal protein uL13 family. As to quaternary structure, part of the 50S ribosomal subunit.

Its function is as follows. This protein is one of the early assembly proteins of the 50S ribosomal subunit, although it is not seen to bind rRNA by itself. It is important during the early stages of 50S assembly. The polypeptide is Large ribosomal subunit protein uL13 (Rhodococcus jostii (strain RHA1)).